Consider the following 396-residue polypeptide: 4-hydroxy-3-methylbut-2-en-1-yl diphosphate synthase (ferredoxin) (396 aa).

[4Fe-4S] cluster-binding residues include Cys-305, Cys-308, Cys-339, and Glu-346.

The protein belongs to the IspG family. It depends on [4Fe-4S] cluster as a cofactor.

It catalyses the reaction (2E)-4-hydroxy-3-methylbut-2-enyl diphosphate + 2 oxidized [2Fe-2S]-[ferredoxin] + H2O = 2-C-methyl-D-erythritol 2,4-cyclic diphosphate + 2 reduced [2Fe-2S]-[ferredoxin] + H(+). It functions in the pathway isoprenoid biosynthesis; isopentenyl diphosphate biosynthesis via DXP pathway; isopentenyl diphosphate from 1-deoxy-D-xylulose 5-phosphate: step 5/6. Functionally, converts 2C-methyl-D-erythritol 2,4-cyclodiphosphate (ME-2,4cPP) into 1-hydroxy-2-methyl-2-(E)-butenyl 4-diphosphate. The protein is 4-hydroxy-3-methylbut-2-en-1-yl diphosphate synthase (ferredoxin) of Gloeobacter violaceus (strain ATCC 29082 / PCC 7421).